A 103-amino-acid chain; its full sequence is Small ribosomal subunit protein uS10 (103 aa).

It belongs to the universal ribosomal protein uS10 family. In terms of assembly, part of the 30S ribosomal subunit.

Its function is as follows. Involved in the binding of tRNA to the ribosomes. The protein is Small ribosomal subunit protein uS10 of Fusobacterium nucleatum subsp. nucleatum (strain ATCC 25586 / DSM 15643 / BCRC 10681 / CIP 101130 / JCM 8532 / KCTC 2640 / LMG 13131 / VPI 4355).